A 425-amino-acid chain; its full sequence is UPF0761 membrane protein XC_3370 (425 aa).

6 consecutive transmembrane segments (helical) span residues 48–68 (VFAL…FPAF), 105–125 (FTVA…HSIE), 154–174 (GTML…LPLF), 182–202 (LAEF…IVLI), 216–236 (ALPG…GFGF), and 250–270 (ALSA…SVLL).

This sequence belongs to the UPF0761 family.

The protein resides in the cell inner membrane. This Xanthomonas campestris pv. campestris (strain 8004) protein is UPF0761 membrane protein XC_3370.